The chain runs to 284 residues: GTP cyclohydrolase MptA (284 aa).

The protein belongs to the GTP cyclohydrolase IV family. In terms of assembly, homodimer. Fe(2+) is required as a cofactor.

The enzyme catalyses GTP + H2O = 7,8-dihydroneopterin 2',3'-cyclic phosphate + formate + diphosphate + H(+). It functions in the pathway cofactor biosynthesis; 5,6,7,8-tetrahydromethanopterin biosynthesis. Converts GTP to 7,8-dihydro-D-neopterin 2',3'-cyclic phosphate, the first intermediate in the biosynthesis of coenzyme methanopterin. The protein is GTP cyclohydrolase MptA of Thermoplasma volcanium (strain ATCC 51530 / DSM 4299 / JCM 9571 / NBRC 15438 / GSS1).